A 360-amino-acid polypeptide reads, in one-letter code: Aminomethyltransferase (360 aa).

Belongs to the GcvT family. In terms of assembly, the glycine cleavage system is composed of four proteins: P, T, L and H.

It carries out the reaction N(6)-[(R)-S(8)-aminomethyldihydrolipoyl]-L-lysyl-[protein] + (6S)-5,6,7,8-tetrahydrofolate = N(6)-[(R)-dihydrolipoyl]-L-lysyl-[protein] + (6R)-5,10-methylene-5,6,7,8-tetrahydrofolate + NH4(+). The glycine cleavage system catalyzes the degradation of glycine. This is Aminomethyltransferase from Pseudomonas putida (strain ATCC 47054 / DSM 6125 / CFBP 8728 / NCIMB 11950 / KT2440).